Here is a 179-residue protein sequence, read N- to C-terminus: Large ribosomal subunit protein uL6 (179 aa).

The protein belongs to the universal ribosomal protein uL6 family. As to quaternary structure, part of the 50S ribosomal subunit.

This protein binds to the 23S rRNA, and is important in its secondary structure. It is located near the subunit interface in the base of the L7/L12 stalk, and near the tRNA binding site of the peptidyltransferase center. This is Large ribosomal subunit protein uL6 from Alkaliphilus metalliredigens (strain QYMF).